The sequence spans 118 residues: Small ribosomal subunit protein uS13 (118 aa).

Residues 94 to 118 (SLPLRGQRTKTNARTRKGPRKPIKK) are disordered.

This sequence belongs to the universal ribosomal protein uS13 family. Part of the 30S ribosomal subunit. Forms a loose heterodimer with protein S19. Forms two bridges to the 50S subunit in the 70S ribosome.

In terms of biological role, located at the top of the head of the 30S subunit, it contacts several helices of the 16S rRNA. In the 70S ribosome it contacts the 23S rRNA (bridge B1a) and protein L5 of the 50S subunit (bridge B1b), connecting the 2 subunits; these bridges are implicated in subunit movement. Contacts the tRNAs in the A and P-sites. The sequence is that of Small ribosomal subunit protein uS13 from Alteromonas mediterranea (strain DSM 17117 / CIP 110805 / LMG 28347 / Deep ecotype).